Here is a 569-residue protein sequence, read N- to C-terminus: BICD family-like cargo adapter 1 (569 aa).

A disordered region spans residues Met1–Gly36. The short motif at Ala97–Gly101 is the CC1 box element. The stretch at Lys102–His283 forms a coiled coil. The disordered stretch occupies residues Ala385–Pro405. Residues Asn458–Arg520 are a coiled coil. The segment at Glu533–Arg554 is disordered.

Belongs to the BICDR family. As to quaternary structure, part of a tripartite complex with dynein and dynactin, acts an adapter linking the dynein motor complex and dynactin. Highly expressed in developing neural tissues and developing eye.

The protein resides in the cytoplasm. It localises to the cytoskeleton. The protein localises to the microtubule organizing center. Its subcellular location is the centrosome. Functionally, acts as an adapter protein linking the dynein motor complex to various cargos and converts dynein from a non-processive to a highly processive motor in the presence of dynactin. Facilitates the interaction between dynein and dynactin and activates dynein processivity (the ability to move along a microtubule for a long distance without falling off the track). Predominantly recruits 2 dyneins, which increases both the force and speed of the microtubule motor. Component of secretory vesicle machinery in developing neurons that acts as a regulator of neurite outgrowth. Regulates the secretory vesicle transport by controlling the accumulation of Rab6-containing secretory vesicles in the pericentrosomal region restricting anterograde secretory transport during the early phase of neuronal differentiation, thereby inhibiting neuritogenesis. This is BICD family-like cargo adapter 1 (bicdl1) from Danio rerio (Zebrafish).